The chain runs to 117 residues: MDMRVPAQLLGLLLLWFPGARCNIQMTQSPSAMSASVGDRVTITCRARQGISNYLAWFQQKPGKVPKHLIYAASSLQSGVPSRFSGSGSGTEFTLTISSLQPEDFATYYCLQHNSYP.

The first 22 residues, 1–22, serve as a signal peptide directing secretion; the sequence is MDMRVPAQLLGLLLLWFPGARC. A framework-1 region spans residues 23–45; that stretch reads NIQMTQSPSAMSASVGDRVTITC. The region spanning 23 to 117 is the Ig-like domain; that stretch reads NIQMTQSPSA…YYCLQHNSYP (95 aa). An intrachain disulfide couples Cys-45 to Cys-110. The segment at 46 to 56 is complementarity-determining-1; that stretch reads RARQGISNYLA. Positions 57–71 are framework-2; sequence WFQQKPGKVPKHLIY. Residues 72–78 form a complementarity-determining-2 region; sequence AASSLQS. A framework-3 region spans residues 79-110; that stretch reads GVPSRFSGSGSGTEFTLTISSLQPEDFATYYC. Residues 111–117 are complementarity-determining-3; it reads LQHNSYP.

In terms of assembly, immunoglobulins are composed of two identical heavy chains and two identical light chains; disulfide-linked.

The protein resides in the secreted. It is found in the cell membrane. V region of the variable domain of immunoglobulin light chains that participates in the antigen recognition. Immunoglobulins, also known as antibodies, are membrane-bound or secreted glycoproteins produced by B lymphocytes. In the recognition phase of humoral immunity, the membrane-bound immunoglobulins serve as receptors which, upon binding of a specific antigen, trigger the clonal expansion and differentiation of B lymphocytes into immunoglobulins-secreting plasma cells. Secreted immunoglobulins mediate the effector phase of humoral immunity, which results in the elimination of bound antigens. The antigen binding site is formed by the variable domain of one heavy chain, together with that of its associated light chain. Thus, each immunoglobulin has two antigen binding sites with remarkable affinity for a particular antigen. The variable domains are assembled by a process called V-(D)-J rearrangement and can then be subjected to somatic hypermutations which, after exposure to antigen and selection, allow affinity maturation for a particular antigen. This Homo sapiens (Human) protein is Immunoglobulin kappa variable 1D-17.